The chain runs to 523 residues: 3-hydroxybenzoate--CoA/4-hydroxybenzoate--CoA ligase (523 aa).

Belongs to the ATP-dependent AMP-binding enzyme family. Benzoate-CoA ligase subfamily.

The enzyme catalyses 4-hydroxybenzoate + ATP + CoA = 4-hydroxybenzoyl-CoA + AMP + diphosphate. The catalysed reaction is 3-hydroxybenzoate + ATP + CoA = 3-hydroxybenzoyl-CoA + AMP + diphosphate. Catalyzes the ligation of 3-hydroxybenzoate or 4-hydroxybenzoate and CoA at the expense of ATP. The enzyme shows low activity towards benzoate, 4-aminobenzoate, 3-aminobenzoate, 3-fluorobenzoate, 4-fluorobenzoate, 3-chlorobenzoate, and 4-chlorobenzoate. There is no activity with 3,4-dihydroxybenzoate, 2,3-dihydroxybenzoate, and 2-hydroxybenzoate as substrates. The sequence is that of 3-hydroxybenzoate--CoA/4-hydroxybenzoate--CoA ligase (hcl) from Thauera aromatica.